The following is a 209-amino-acid chain: Kynurenine formamidase (209 aa).

W18 contacts substrate. Residues H48, H52, and D54 each coordinate Zn(2+). The Proton donor/acceptor role is filled by H58. H160 and E172 together coordinate Zn(2+).

It belongs to the Cyclase 1 superfamily. KynB family. Homodimer. The cofactor is Zn(2+).

The catalysed reaction is N-formyl-L-kynurenine + H2O = L-kynurenine + formate + H(+). Its pathway is amino-acid degradation; L-tryptophan degradation via kynurenine pathway; L-kynurenine from L-tryptophan: step 2/2. Functionally, catalyzes the hydrolysis of N-formyl-L-kynurenine to L-kynurenine, the second step in the kynurenine pathway of tryptophan degradation. The polypeptide is Kynurenine formamidase (Paraburkholderia phymatum (strain DSM 17167 / CIP 108236 / LMG 21445 / STM815) (Burkholderia phymatum)).